The following is a 199-amino-acid chain: Elongation factor Ts (199 aa).

Positions 80 to 83 (TDFV) are involved in Mg(2+) ion dislocation from EF-Tu.

It belongs to the EF-Ts family.

The protein resides in the cytoplasm. In terms of biological role, associates with the EF-Tu.GDP complex and induces the exchange of GDP to GTP. It remains bound to the aminoacyl-tRNA.EF-Tu.GTP complex up to the GTP hydrolysis stage on the ribosome. The protein is Elongation factor Ts of Thermodesulfovibrio yellowstonii (strain ATCC 51303 / DSM 11347 / YP87).